Reading from the N-terminus, the 212-residue chain is ER lumen protein-retaining receptor 2 (212 aa).

Residues 1–4 (MNIF) lie on the Lumenal side of the membrane. Residues 5 to 24 (RLTGDLSHLAAIIILLLKIW) traverse the membrane as a helical segment. The Cytoplasmic portion of the chain corresponds to 25–32 (KSRSCAGI). The chain crosses the membrane as a helical span at residues 33 to 52 (SGKSQLLFALVFTTRYLDLF). The interval 47–48 (RY) is interaction with the K-D-E-L motif on target proteins. Residues 53-58 (TSFISL) are Lumenal-facing. Residues 59 to 79 (YNTSMKLIYIACSYATVYLIY) form a helical membrane-spanning segment. Topologically, residues 80–92 (MKFKATYDGNHDT) are cytoplasmic. Residues 93-110 (FRVEFLIVPVGGLSFLVN) form a helical membrane-spanning segment. The Lumenal portion of the chain corresponds to 111-116 (HDFSPL). A helical membrane pass occupies residues 117-135 (EILWTFSIYLESVAILPQL). Topologically, residues 136–149 (FMISKTGEAETITT) are cytoplasmic. The helical transmembrane segment at 150–168 (HYLFFLGLYRALYLVNWIW) threads the bilayer. The tract at residues 159–169 (RALYLVNWIWR) is interaction with the K-D-E-L motif on target proteins. Topologically, residues 169–178 (RYYFEGFFDL) are lumenal. A helical transmembrane segment spans residues 179-199 (IAVVAGVVQTVLYCDFFYLYV). Over 200 to 212 (TKVLKGKKLSLPA) the chain is Cytoplasmic. The interval 204 to 207 (KGKK) is important for recycling of cargo proteins with the sequence motif K-D-E-L from the Golgi to the endoplasmic reticulum.

Belongs to the ERD2 family.

The protein localises to the endoplasmic reticulum membrane. Its subcellular location is the golgi apparatus membrane. The protein resides in the cytoplasmic vesicle. It is found in the COPI-coated vesicle membrane. Its function is as follows. Membrane receptor that binds the K-D-E-L sequence motif in the C-terminal part of endoplasmic reticulum resident proteins and maintains their localization in that compartment by participating to their vesicle-mediated recycling back from the Golgi. Binding is pH dependent, and is optimal at pH 5-5.4. The polypeptide is ER lumen protein-retaining receptor 2 (KDELR2) (Gallus gallus (Chicken)).